A 115-amino-acid chain; its full sequence is Tyrosine-protein phosphatase 18 (115 aa).

In terms of domain architecture, Tyrosine-protein phosphatase spans 1-115 (WLMIVEQKCR…ETGSDAPMVV (115 aa)). D83 provides a ligand contact to substrate.

The protein belongs to the protein-tyrosine phosphatase family.

It carries out the reaction O-phospho-L-tyrosyl-[protein] + H2O = L-tyrosyl-[protein] + phosphate. In Styela plicata (Wrinkled sea squirt), this protein is Tyrosine-protein phosphatase 18 (STY-18).